Reading from the N-terminus, the 970-residue chain is UvrABC system protein A (970 aa).

Glycine 34–serine 41 serves as a coordination point for ATP. The C4-type zinc finger occupies cysteine 284–cysteine 311. ABC transporter domains are found at residues tryptophan 340 to leucine 617 and glycine 637 to alanine 965. Glycine 669–serine 676 lines the ATP pocket. The segment at cysteine 768–cysteine 794 adopts a C4-type zinc-finger fold.

It belongs to the ABC transporter superfamily. UvrA family. Forms a heterotetramer with UvrB during the search for lesions.

The protein resides in the cytoplasm. Its function is as follows. The UvrABC repair system catalyzes the recognition and processing of DNA lesions. UvrA is an ATPase and a DNA-binding protein. A damage recognition complex composed of 2 UvrA and 2 UvrB subunits scans DNA for abnormalities. When the presence of a lesion has been verified by UvrB, the UvrA molecules dissociate. This Synechocystis sp. (strain ATCC 27184 / PCC 6803 / Kazusa) protein is UvrABC system protein A.